Here is a 73-residue protein sequence, read N- to C-terminus: Antimicrobial peptide 6 (73 aa).

The N-terminal stretch at methionine 1–alanine 22 is a signal peptide. Residues glutamate 45–tyrosine 73 constitute a propeptide that is removed on maturation.

The protein belongs to the non-disulfide-bridged peptide (NDBP) superfamily. Short antimicrobial peptide (group 4) family. In terms of tissue distribution, expressed by the venom gland.

It localises to the secreted. In terms of biological role, antibacterial peptide. This chain is Antimicrobial peptide 6, found in Tityus costatus (Brazilian scorpion).